The sequence spans 54 residues: Photoreceptor disk component PRCD (54 aa).

Cysteine 2 carries the S-palmitoyl cysteine lipid modification. Positions 24-54 are disordered; the sequence is QPEPNGVDGAVSGSSLETDLQSSGREKEPLK. Over residues 35–46 the composition is skewed to polar residues; that stretch reads SGSSLETDLQSS.

This sequence belongs to the PRCD family. In terms of assembly, interacts with RHO/rhodopsin; the interaction promotes PRCD stability. Post-translationally, palmitoylated at Cys-2. Palmitoylation is essential for protein stability and trafficking to the photoreceptor outer segment, but does not appear to be essential for membrane localization. Probably palmitoylated by ZDHHC3. In terms of processing, phosphorylated. Expressed in retina (at protein level).

The protein resides in the cell projection. The protein localises to the cilium. Its subcellular location is the photoreceptor outer segment. It is found in the membrane. It localises to the endoplasmic reticulum. The protein resides in the golgi apparatus. Functionally, involved in vision. This chain is Photoreceptor disk component PRCD, found in Bos taurus (Bovine).